We begin with the raw amino-acid sequence, 154 residues long: MTNKELQQLTETISLAFFKRPFTHTARFNNRLRTTGGRYLLKSHDIELNPKQYERYGKEELIGIIKHELCHYHLHLEGKGYKHGDKDFQEWLAKTGAPRYCKTAQDEQTVLVYTCTSCSRTYHRRRKINTQKYVCGTCHGKLKFLSKKVLHQRK.

In terms of domain architecture, SprT-like spans 6 to 144 (LQQLTETISL…CGTCHGKLKF (139 aa)). A Zn(2+)-binding site is contributed by histidine 67. Glutamate 68 is a catalytic residue. Zn(2+) is bound at residue histidine 71.

It belongs to the SprT family. It depends on Zn(2+) as a cofactor.

Its subcellular location is the cytoplasm. This Shouchella clausii (strain KSM-K16) (Alkalihalobacillus clausii) protein is Protein SprT-like.